A 196-amino-acid chain; its full sequence is MSLVLDPAAQDLLFREARTANTFTDEPVTDEQVQAIYDLVKYGPTAFNQSPLRITLVRSPEARERLVAHMAEGNRPKTAAAPLVAILSADNEFHEELPELFPHFPAAKDAFFSERPVREGAATLNAALQAAYFIVGVRAAGLAAGPMTGLDFEGVRKEFLDDDHTPLMVVNIGRPGPDAWFPRSPRLAYDQVVTTV.

It belongs to the nitroreductase family. HadB/RutE subfamily. FMN serves as cofactor.

The chain is Putative NADH dehydrogenase/NAD(P)H nitroreductase SCO5049 from Streptomyces coelicolor (strain ATCC BAA-471 / A3(2) / M145).